We begin with the raw amino-acid sequence, 167 residues long: Urease accessory protein UreE (167 aa).

The interval 137–167 (ARGAYHAHGGHSHGHDHGHSHGHDHHDHSHD) is disordered. A compositionally biased stretch (basic and acidic residues) spans 149–167 (HGHDHGHSHGHDHHDHSHD).

Belongs to the UreE family.

It is found in the cytoplasm. Involved in urease metallocenter assembly. Binds nickel. Probably functions as a nickel donor during metallocenter assembly. The chain is Urease accessory protein UreE from Rhizobium rhizogenes (strain K84 / ATCC BAA-868) (Agrobacterium radiobacter).